The following is a 374-amino-acid chain: Fasciclin-like arabinogalactan protein CTB11 (374 aa).

The N-terminal stretch at 1 to 18 (MHFPALAVAGCLLSRATA) is a signal peptide. 2 consecutive FAS1 domains span residues 19–171 (QSLD…DANM) and 173–302 (LPHN…DGAL). N-linked (GlcNAc...) asparagine glycans are attached at residues N52, N72, N120, N132, and N176. The chain crosses the membrane as a helical span at residues 328-348 (ILASHQLTLLAVLAMALVSIL).

This sequence belongs to the fasciclin-like AGP family.

Its subcellular location is the membrane. Its pathway is mycotoxin biosynthesis. Its function is as follows. Fasciclin-like arabinogalactan protein; part of the gene cluster that mediates the biosynthesis of cercosporin, a light-activated, non-host-selective toxin. The perylenequinone chromophore of cercosporin absorbs light energy to attain an electronically-activated triplet state and produces active oxygen species such as the hydroxyl radical, superoxide, hydrogen peroxide or singlet oxygen upon reaction with oxygen molecules. These reactive oxygen species cause damage to various cellular components including lipids, proteins and nucleic acids. The first step of cercosporin biosynthesis is performed by the polyketide synthase CTB1 which catalyzes the formation of nor-toralactone. The starter unit acyltransferase (SAT) domain of CTB1 initiates polyketide extension by the selective utilization of acetyl-CoA, which is elongated to the heptaketide in the beta-ketoacyl synthase (KS) domain by successive condensations with six malonyl units introduced by the malonyl acyltransferase (MAT) domain. The product template (PT) domain catalyzes C4-C9 and C2-C11 aldol cyclizations and dehydrations to a trihydroxynaphthalene, which is thought to be delivered to the thioesterase (TE) domain for product release. The bifunctional enzyme CTB3 then methylates nor-toralactone to toralactone before conducting an unusual oxidative aromatic ring opening. The O-methyltransferase CTB2 further methylates the nascent OH-6 of the CBT3 product, blocking further oxidation at this site before the reductase CTB6 reduces the 2-oxopropyl ketone at position C7, giving naphthalene. The FAD-dependent monooxygenase CTB5 in concert with the multicopper oxidase CTB12 are responsible for homodimerization of naphthalene with CTB7 installing the dioxepine moiety, finally producing cercosporin. The fasciclin domain-containing protein CTB11 might act with CTB5 and CTB12 whereas the roles of CTB9 and CTB10 have still to be elucidated. In Cercospora beticola (Sugarbeet leaf spot fungus), this protein is Fasciclin-like arabinogalactan protein CTB11.